A 101-amino-acid chain; its full sequence is AFA-III adhesin operon regulatory protein (101 aa).

Regulates the transcription of genes involved in the biosynthesis of afimbrial adhesin-III. The chain is AFA-III adhesin operon regulatory protein (afaA) from Escherichia coli.